A 332-amino-acid polypeptide reads, in one-letter code: Aquaporin-7-2 (332 aa).

Residues 1-40 show a composition bias toward polar residues; sequence MSGQHQITEQPSGNPLSRTSTLIQEKPLTPTSSHAGTQKQ. The interval 1–46 is disordered; the sequence is MSGQHQITEQPSGNPLSRTSTLIQEKPLTPTSSHAGTQKQPEAPRQ. Over 1–66 the chain is Cytoplasmic; that stretch reads MSGQHQITEQ…RHAIRKPMAE (66 aa). The chain crosses the membrane as a helical span at residues 67 to 87; sequence FFGVALLIIFGAGSACQVVLS. The Extracellular portion of the chain corresponds to 88–100; sequence TNPDVASSARGSF. Residues 101-121 form a helical membrane-spanning segment; the sequence is LSINFGWAIGIAMGVWVSGGI. Topologically, residues 122-144 are cytoplasmic; sequence SGGHINPAITIAMATYRGFPWCK. An NPA 1 motif is present at residues 127–129; sequence NPA. A helical membrane pass occupies residues 145–165; the sequence is VPSYILAQVLGGVVGAALVYA. Residues 166–199 lie on the Extracellular side of the membrane; sequence NYIHAIDVFEGGHHIRTEATASLFATYALPYMTQ. Residues 200-220 traverse the membrane as a helical segment; that stretch reads ASCFFSEFLATAVLSMMVFAL. The Cytoplasmic portion of the chain corresponds to 221-230; sequence TDKRNHSPTN. The helical transmembrane segment at 231 to 251 threads the bilayer; the sequence is GLLPFALFILFVGLGASLGME. Residues 252 to 283 lie on the Extracellular side of the membrane; sequence TAYALNPARDFGPRLFLAMAGYGKALFNYRSQ. Positions 257–259 match the NPA 2 motif; it reads NPA. A helical membrane pass occupies residues 284-304; it reads YWLWAPIIAPVLGAQAGGLLY. At 305–332 the chain is on the cytoplasmic side; it reads DTFLNDGDNSPIKWRCASSQEQQLAEVV.

It belongs to the MIP/aquaporin (TC 1.A.8) family.

Its subcellular location is the membrane. The catalysed reaction is H2O(in) = H2O(out). Water channel required to facilitate the transport of water across membranes. Does not mediate the transport carbon dioxide across the membrane. The chain is Aquaporin-7-2 from Laccaria bicolor (Bicoloured deceiver).